The chain runs to 519 residues: Protein M35 (519 aa).

A disordered region spans residues 485 to 519 (PVRPIRGGGQRMANMRGARPYSTVQRGRRRHESEV). The span at 510 to 519 (RGRRRHESEV) shows a compositional bias: basic residues.

Its subcellular location is the host nucleus. Plays a role in the inhibition of host type I interferon production within the host nucleus. Targets specifically the NF-kappa-B-mediated interferon-beta transcription. In Mus musculus (Mouse), this protein is Protein M35 (M35).